We begin with the raw amino-acid sequence, 410 residues long: MKEELLKRFTKYVKVDTQSNEESTVCPTTKGQMELANILVTELKEIGMQEVTVDEFGYVMATLPSNTTKEVPVIGFLAHLDTATDLTGKNVQPQVHENYDGKDIVLNKELNVVLSPKQFPELAQYKGKTLITTDGTTLLGADDKAGITEIMVAMNYLINHPEIKHGKIRIAFTPDEEIGRGPERFDVEAFGAKYAYTMDGGPLGELEYESFNAAAAKITFNGNSVHPGTAKNKMVNAVKMAMEFDARIPKEEAPEHTDGYEGFYHLISLNGDVEQAKSYYIIRDFDHLKFVERKTHIATVAKELEEKYGKGSVELKLNDQYYNMREKIEPVKEIVDIVSAAMRNLDIEPKISPIRGGTDGAQLSYKGLPTPNIFGGGENFHGKFEYVALESMVKATEVIIEVARLFEEKE.

H79 provides a ligand contact to Zn(2+). D81 is a catalytic residue. A Zn(2+)-binding site is contributed by D142. The Proton acceptor role is filled by E176. Residues E177, D199, and H381 each coordinate Zn(2+).

It belongs to the peptidase M20B family. Zn(2+) serves as cofactor.

The protein resides in the cytoplasm. It catalyses the reaction Release of the N-terminal residue from a tripeptide.. Its function is as follows. Cleaves the N-terminal amino acid of tripeptides. This is Peptidase T from Listeria welshimeri serovar 6b (strain ATCC 35897 / DSM 20650 / CCUG 15529 / CIP 8149 / NCTC 11857 / SLCC 5334 / V8).